The sequence spans 239 residues: Octanoyltransferase (239 aa).

Positions 48-236 (DGGDELVWLV…AFEAVFGETT (189 aa)) constitute a BPL/LPL catalytic domain. Substrate is bound by residues 87 to 94 (RGGEYTYH), 167 to 169 (ALG), and 180 to 182 (GLS). C198 serves as the catalytic Acyl-thioester intermediate.

This sequence belongs to the LipB family.

The protein resides in the cytoplasm. The catalysed reaction is octanoyl-[ACP] + L-lysyl-[protein] = N(6)-octanoyl-L-lysyl-[protein] + holo-[ACP] + H(+). It participates in protein modification; protein lipoylation via endogenous pathway; protein N(6)-(lipoyl)lysine from octanoyl-[acyl-carrier-protein]: step 1/2. In terms of biological role, catalyzes the transfer of endogenously produced octanoic acid from octanoyl-acyl-carrier-protein onto the lipoyl domains of lipoate-dependent enzymes. Lipoyl-ACP can also act as a substrate although octanoyl-ACP is likely to be the physiological substrate. The protein is Octanoyltransferase of Rhizobium johnstonii (strain DSM 114642 / LMG 32736 / 3841) (Rhizobium leguminosarum bv. viciae).